Consider the following 61-residue polypeptide: [Thr6, Val10, Asp11]-phyllokinin (61 aa).

Positions 1–22 are cleaved as a signal peptide; sequence MSFLKKSLFLVLFLGLVSFSIC. A propeptide spanning residues 23 to 50 is cleaved from the precursor; the sequence is EEEKRETEEEENEDEMNEESEEKRESPE. The tract at residues 24 to 61 is disordered; it reads EEKRETEEEENEDEMNEESEEKRESPERPPGFTPFRVD. The span at 30-42 shows a compositional bias: acidic residues; sequence EEEENEDEMNEES.

Belongs to the frog skin active peptide (FSAP) family. Bradykinin-related peptide subfamily. Expressed by the skin glands.

The protein localises to the secreted. Induces relaxation of rat smooth muscle from tail artery and contraction of that from ileum, urinary bladder and uterus. Binds to both bradykinin receptor B1 (BDKRB1) and B2 (BDKRB2). In Agalychnis spurrelli (Gliding leaf frog), this protein is [Thr6, Val10, Asp11]-phyllokinin.